The sequence spans 1001 residues: Ankyrin repeat domain-containing protein 35 (1001 aa).

ANK repeat units follow at residues 53–82, 86–115, 119–148, 152–181, 185–214, and 218–247; these read NGQS…DINS, DGST…NEDA, ENRS…FLDV, DGRT…RVNV, NDKS…DAGA, and TGHD…RRRR. Disordered regions lie at residues 256–296, 352–482, and 559–601; these read PDLA…PCSE, PRAS…VAEP, and PEVP…ALGG. A compositionally biased stretch (acidic residues) spans 281–295; sequence PEEEQEEKEDEDPCS. Residues 295 to 344 are a coiled coil; it reads SEEWRWKYEEERRKVVRLEQELVQKTEECKTQAAAYLDLENQIREQAQEL. Residues 402–422 are compositionally biased toward basic and acidic residues; it reads KKAEDSAPGKIQYEVHGRSQP. The span at 423–434 shows a compositional bias: low complexity; that stretch reads EEQGPPQSPASE. Residues 440–450 are compositionally biased toward polar residues; sequence TGQQLTTNGAQ. Residues 579–588 show a composition bias toward basic and acidic residues; sequence KQDEEKEKRV. Coiled coils occupy residues 610–696, 733–810, and 851–968; these read KGQL…LLAS, ISTL…IGKL, and QELK…HEEI. A disordered region spans residues 879-902; the sequence is RRSGDLAAQAAEQERQASEMRGRS. Residues 890–902 show a composition bias toward basic and acidic residues; that stretch reads EQERQASEMRGRS.

This is Ankyrin repeat domain-containing protein 35 (ANKRD35) from Homo sapiens (Human).